Here is a 295-residue protein sequence, read N- to C-terminus: Probable peptidyl-prolyl cis-trans isomerase B (295 aa).

Disordered stretches follow at residues 105–128 and 274–295; these read SADK…PATV and IASG…LRLD. Residues 126-294 form the PPIase cyclophilin-type domain; that stretch reads ATVSASMATN…TEVTIESLRL (169 aa).

This sequence belongs to the cyclophilin-type PPIase family.

The enzyme catalyses [protein]-peptidylproline (omega=180) = [protein]-peptidylproline (omega=0). Functionally, PPIases accelerate the folding of proteins. It catalyzes the cis-trans isomerization of proline imidic peptide bonds in oligopeptides. The chain is Probable peptidyl-prolyl cis-trans isomerase B (ppiB) from Mycobacterium leprae (strain TN).